The primary structure comprises 854 residues: MQENNINDLVASASRVIAPLWPIFTFAAHHPWMGLEKQSFEQVANWLKEARNVDIYPSASMIHSAKAKGEIEESFLQMSLSRWLDSQSFHIPREKAERFCQAALKLEKLPSSLLSSPEVNKLAEEMNYINTASMQASVMQPISSLIESQNSENLSDVLNYHIIKWCKLYLDESGSNWTMPNREKGFYRAWQHLITFDPALSKNERKVLKNWPQDAEVALARALSELGISESNIQSYLEGHLLSLPGWAGMIRWRSQQSIQEQELLIEYLAVRISMELAIVKPYLPLKNQKVEKKVSIVPLIASWIYWGNISTREWLQMPAAEQSELLAFAYRFDENIRRKLWLEAWEQTHAEQLREKIASTQRATNDKKRVLAQLAFCIDVRSEPFRRHLEKLGPFETFGIAGFFGLPIATSELGSNNNHPSLPVILKPKHQIKELTNENELKSYEQRKRVGSSVRYTFKTMKQNVMTSMALPELSGPLLGLQMVTRSFVPRGVGGFIRKLRKTMLQKPDTTFSLNHVHDTKGEIPIGFTKEEKVNYVRQALKIVGLTEKFAPLVVMCGHSSQSTNNPYAAALECGACGGAAGGFNARVFATLCNLPEVREALFAEGIKIPKDTIFAAAEHKTTVDELEWIYVPELSETAQEAFDCIESIMPNVSQHANRERLTQLPNFKTKIKNASKEAHRFAEDWSEIRPEWGLARNASFIIGQRELTQDCDLEGRAFLHNYDWKQDESGDILANIIAGPGTVAQWINLQYYASTVAPHYYGSGNKTTQTVTAGLGVMQGNASDLLPGLPWQSVMQSDSETYHSPLRLLIVIQAPSQYIERLLNNDFTFREKVQNGWVRLASVDPKGHWKNW.

Residues cysteine 378, aspartate 380, histidine 560, and cysteine 575 each contribute to the Zn(2+) site.

The protein belongs to the inorganic carbon transporter (TC 9.A.2) DabA family. As to quaternary structure, forms a complex with DabB. Zn(2+) serves as cofactor.

It is found in the cell membrane. Functionally, part of an energy-coupled inorganic carbon pump. In Bacillus cereus (strain ATCC 14579 / DSM 31 / CCUG 7414 / JCM 2152 / NBRC 15305 / NCIMB 9373 / NCTC 2599 / NRRL B-3711), this protein is Probable inorganic carbon transporter subunit DabA.